Here is a 420-residue protein sequence, read N- to C-terminus: Argininosuccinate synthase (420 aa).

ATP contacts are provided by residues alanine 9–serine 17 and alanine 35. Residues tyrosine 86 and serine 91 each coordinate L-citrulline. Serine 114 to asparagine 122 serves as a coordination point for ATP. 3 residues coordinate L-aspartate: threonine 118, asparagine 122, and aspartate 123. Asparagine 122 provides a ligand contact to L-citrulline. L-citrulline is bound by residues arginine 126, serine 179, serine 188, glutamate 273, and tyrosine 285.

This sequence belongs to the argininosuccinate synthase family. Type 1 subfamily. As to quaternary structure, homotetramer.

It localises to the cytoplasm. It carries out the reaction L-citrulline + L-aspartate + ATP = 2-(N(omega)-L-arginino)succinate + AMP + diphosphate + H(+). The protein operates within amino-acid biosynthesis; L-arginine biosynthesis; L-arginine from L-ornithine and carbamoyl phosphate: step 2/3. Catalyzes the eighth step in arginine biosynthesis. Also has a catabolic function as the first enzyme of citrulline utilization as nitrogen source via arginine and the reactions involved in the arginase pathway. In Saccharomyces cerevisiae (strain ATCC 204508 / S288c) (Baker's yeast), this protein is Argininosuccinate synthase (ARG1).